Here is an 87-residue protein sequence, read N- to C-terminus: Small ribosomal subunit protein uS17 (87 aa).

The protein belongs to the universal ribosomal protein uS17 family. Part of the 30S ribosomal subunit.

Functionally, one of the primary rRNA binding proteins, it binds specifically to the 5'-end of 16S ribosomal RNA. The protein is Small ribosomal subunit protein uS17 of Bacillus cytotoxicus (strain DSM 22905 / CIP 110041 / 391-98 / NVH 391-98).